We begin with the raw amino-acid sequence, 248 residues long: ATP synthase subunit a, chloroplastic (248 aa).

Helical transmembrane passes span 35 to 55 (GQVF…AIAG), 94 to 114 (IPYI…GALI), 133 to 153 (INTT…AGLS), 202 to 222 (VFTL…GLFA), and 224 to 244 (SIQA…ALEG).

The protein belongs to the ATPase A chain family. F-type ATPases have 2 components, CF(1) - the catalytic core - and CF(0) - the membrane proton channel. CF(1) has five subunits: alpha(3), beta(3), gamma(1), delta(1), epsilon(1). CF(0) has four main subunits: a, b, b' and c.

It localises to the plastid. The protein resides in the chloroplast thylakoid membrane. Functionally, key component of the proton channel; it plays a direct role in the translocation of protons across the membrane. This chain is ATP synthase subunit a, chloroplastic, found in Antithamnion sp. (Red alga).